Here is a 765-residue protein sequence, read N- to C-terminus: Palmitoyltransferase ZDHHC8 (765 aa).

Topologically, residues 1–13 (MPRSPGTRLKPAK) are cytoplasmic. Residues 14–34 (YIPVATAAALLVGSSTLFFVF) form a helical membrane-spanning segment. At 35 to 52 (TCPWLTRAVSPAVPVYNG) the chain is on the lumenal side. The chain crosses the membrane as a helical span at residues 53–73 (IIFLFVLANFSMATFMDPGVF). Residues 74-148 (PRADEDEDKE…NCIGRRNYRY (75 aa)) lie on the Cytoplasmic side of the membrane. Residues 104–154 (KWCATCHFYRPPRCSHCSVCDNCVEDFDHHCPWVNNCIGRRNYRYFFLFLL) form the DHHC domain. Residue Cys-134 is the S-palmitoyl cysteine intermediate of the active site. Residues 149-169 (FFLFLLSLSAHMVGVVAFGLV) form a helical membrane-spanning segment. The Lumenal portion of the chain corresponds to 170–190 (YVLNHAEGLGAAHTTITMAVM). A helical transmembrane segment spans residues 191–211 (CVAGLFFIPVIGLTGFHVVLV). Residues 212-765 (TRGRTTNEQV…VGGTTYEISV (554 aa)) are Cytoplasmic-facing. Residues 293–352 (GLGRSKSKGSLDRLDEKPLDLGPPLPPKIEAGTFSSDLQTPRPGSAESALSVQRTSPPTP) form a disordered region. Over residues 301–311 (GSLDRLDEKPL) the composition is skewed to basic and acidic residues. Ser-337 bears the Phosphoserine mark. Residue Arg-441 is modified to Omega-N-methylarginine. The segment at 509–540 (LHPGATGDPPRPLPRSFSPVLGPRPREPSPVR) is disordered. A phosphoserine mark is found at Ser-606, Ser-627, Ser-675, Ser-682, Ser-725, and Ser-743. Residues 613–747 (GPGFGGARNP…PGPSASPTRH (135 aa)) form a disordered region. Residues 622–653 (PALQTSLSSLSSSVSRAPRTSSSSLQADQASS) show a composition bias toward low complexity.

Belongs to the DHHC palmitoyltransferase family. ERF2/ZDHHC9 subfamily. As to expression, widely expressed.

It localises to the golgi apparatus membrane. The protein resides in the mitochondrion membrane. It carries out the reaction L-cysteinyl-[protein] + hexadecanoyl-CoA = S-hexadecanoyl-L-cysteinyl-[protein] + CoA. In terms of biological role, palmitoyltransferase that catalyzes the addition of palmitate onto various protein substrates and therefore functions in several unrelated biological processes. Through the palmitoylation of ABCA1 regulates the localization of the transporter to the plasma membrane and thereby regulates its function in cholesterol and phospholipid efflux. Could also pamitoylate the D(2) dopamine receptor DRD2 and regulate its stability and localization to the plasma membrane. Could also play a role in glutamatergic transmission. Its function is as follows. (Microbial infection) Able to palmitoylate SARS coronavirus-2/SARS-CoV-2 spike protein following its synthesis in the endoplasmic reticulum (ER). In the infected cell, promotes spike biogenesis by protecting it from premature ER degradation, increases half-life and controls the lipid organization of its immediate membrane environment. Once the virus has formed, spike palmitoylation controls fusion with the target cell. This Homo sapiens (Human) protein is Palmitoyltransferase ZDHHC8.